The sequence spans 142 residues: MFLGTHSPRLDEKGRIILPAKFREELASGLVLTRGQERCIYVFSEREFGRIHEQMREAPISSKQTRDYIRVFLSGASDEVPDKQGRVTIPPALRAYAGLGRELAVIGAGSRAEIWDAQAWNEYLAEKETSFSETDDAIPGIF.

2 consecutive SpoVT-AbrB domains span residues 5-47 and 76-119; these read THSP…SERE and ASDE…DAQA.

Belongs to the MraZ family. As to quaternary structure, forms oligomers.

It is found in the cytoplasm. It localises to the nucleoid. The protein is Transcriptional regulator MraZ of Arthrobacter sp. (strain FB24).